A 74-amino-acid chain; its full sequence is Small, acid-soluble spore protein Tlp (74 aa).

The tract at residues 38–74 (AEELSSKEKDELSSKNERRKESVDGLRSEIKDEADSQ) is disordered.

This sequence belongs to the Tlp family.

The protein localises to the spore core. This Oceanobacillus iheyensis (strain DSM 14371 / CIP 107618 / JCM 11309 / KCTC 3954 / HTE831) protein is Small, acid-soluble spore protein Tlp.